The following is a 728-amino-acid chain: 1,4-alpha-glucan branching enzyme GlgB (728 aa).

D405 acts as the Nucleophile in catalysis. Residue E458 is the Proton donor of the active site.

This sequence belongs to the glycosyl hydrolase 13 family. GlgB subfamily. Monomer.

The enzyme catalyses Transfers a segment of a (1-&gt;4)-alpha-D-glucan chain to a primary hydroxy group in a similar glucan chain.. It participates in glycan biosynthesis; glycogen biosynthesis. In terms of biological role, catalyzes the formation of the alpha-1,6-glucosidic linkages in glycogen by scission of a 1,4-alpha-linked oligosaccharide from growing alpha-1,4-glucan chains and the subsequent attachment of the oligosaccharide to the alpha-1,6 position. This is 1,4-alpha-glucan branching enzyme GlgB from Serratia proteamaculans (strain 568).